The chain runs to 92 residues: Small ribosomal subunit protein uS19c (92 aa).

It belongs to the universal ribosomal protein uS19 family.

The protein localises to the plastid. It localises to the chloroplast. In terms of biological role, protein S19 forms a complex with S13 that binds strongly to the 16S ribosomal RNA. The polypeptide is Small ribosomal subunit protein uS19c (Nandina domestica (Heavenly bamboo)).